We begin with the raw amino-acid sequence, 229 residues long: Protein-lysine N-methyltransferase EFM4 (229 aa).

Belongs to the class I-like SAM-binding methyltransferase superfamily. EFM4 family.

The protein resides in the cytoplasm. It carries out the reaction L-lysyl-[protein] + S-adenosyl-L-methionine = N(6)-methyl-L-lysyl-[protein] + S-adenosyl-L-homocysteine + H(+). The enzyme catalyses N(6)-methyl-L-lysyl-[protein] + S-adenosyl-L-methionine = N(6),N(6)-dimethyl-L-lysyl-[protein] + S-adenosyl-L-homocysteine + H(+). Its function is as follows. S-adenosyl-L-methionine-dependent protein-lysine N-methyltransferase that mono- and dimethylates elongation factor 1-alpha (TEF1 and TEF2) at 'Lys-316'. May play a role in intracellular transport. This chain is Protein-lysine N-methyltransferase EFM4, found in Saccharomyces cerevisiae (strain ATCC 204508 / S288c) (Baker's yeast).